A 280-amino-acid chain; its full sequence is Phosphatidylglycerol--prolipoprotein diacylglyceryl transferase (280 aa).

4 helical membrane-spanning segments follow: residues 30-50 (WYGLAYVAGILLGWLYARRII), 71-91 (FLLWAAGGIVLGGRIGYILFY), 106-126 (IWNGGMSFHGGLLGTTLAIII), and 132-152 (AIPLWSLFDVVAAVVPIGLFF). R154 contacts a 1,2-diacyl-sn-glycero-3-phospho-(1'-sn-glycerol). 3 helical membrane passes run 188–208 (QLYEAALEGIVLLVVLAWFVY), 217–237 (GLVTGIFVCGYAASRIFVEFF), and 251–271 (WLTMGMVLSLPMALVGIWAIA).

The protein belongs to the Lgt family.

Its subcellular location is the cell inner membrane. It carries out the reaction L-cysteinyl-[prolipoprotein] + a 1,2-diacyl-sn-glycero-3-phospho-(1'-sn-glycerol) = an S-1,2-diacyl-sn-glyceryl-L-cysteinyl-[prolipoprotein] + sn-glycerol 1-phosphate + H(+). Its pathway is protein modification; lipoprotein biosynthesis (diacylglyceryl transfer). Its function is as follows. Catalyzes the transfer of the diacylglyceryl group from phosphatidylglycerol to the sulfhydryl group of the N-terminal cysteine of a prolipoprotein, the first step in the formation of mature lipoproteins. The polypeptide is Phosphatidylglycerol--prolipoprotein diacylglyceryl transferase (Rhizobium meliloti (strain 1021) (Ensifer meliloti)).